A 364-amino-acid polypeptide reads, in one-letter code: Long-wave-sensitive opsin 1 (364 aa).

The Extracellular segment spans residues 1 to 52 (MAHTWGPQRLAGGQPQANFEESTQGSIFTYTNSNSTRDPFEGPNYHIAPRWV). Residue serine 22 is glycosylated (O-linked (GlcNAc) serine). N-linked (GlcNAc...) asparagine glycosylation is present at asparagine 34. Residues 53-77 (YHLTSAWMVFVVIASVFTNGLVLAA) traverse the membrane as a helical segment. Residues 78–89 (TMRFKKLRHPLN) lie on the Cytoplasmic side of the membrane. A helical membrane pass occupies residues 90–115 (WILVNLAIADLAETIIASTISVVNQM). Residues 116–129 (YGYFVLGHPLCVVE) are Extracellular-facing. Cysteines 126 and 203 form a disulfide. A helical transmembrane segment spans residues 130–149 (GYTVSLCGITGLWSLAIISW). Over 150 to 168 (ERWMVVCKPFGNVRFDAKL) the chain is Cytoplasmic. The chain crosses the membrane as a helical span at residues 169 to 192 (ATAGIAFSWIWAAVWTAPPIFGWS). The Extracellular portion of the chain corresponds to 193 to 218 (RYWPHGLKTSCGPDVFSGSSYPGVQS). The helical transmembrane segment at 219-246 (YMIVLMITCCFIPLSVIILCYLQVWLAI) threads the bilayer. The Cytoplasmic segment spans residues 247–268 (RAVAKQQKESESTQKAEKEVTR). The helical transmembrane segment at 269 to 292 (MVMVMIFAYCLCWGPYTFFACFAA) threads the bilayer. Over 293–300 (AHPGYAFH) the chain is Extracellular. A helical transmembrane segment spans residues 301–325 (PLVAALPAYFAKSATIYNPIIYVFM). An N6-(retinylidene)lysine modification is found at lysine 312. The Cytoplasmic segment spans residues 326-364 (NRQFRNCILQLFGKKVDDSSELSSVSKTEASSVSSVSPA).

It belongs to the G-protein coupled receptor 1 family. Opsin subfamily. Post-translationally, phosphorylated on some or all of the serine and threonine residues present in the C-terminal region. The three color pigments are found in the cone photoreceptor cells.

It localises to the membrane. Functionally, visual pigments are the light-absorbing molecules that mediate vision. They consist of an apoprotein, opsin, covalently linked to cis-retinal. This chain is Long-wave-sensitive opsin 1 (OPN1LW), found in Capra hircus (Goat).